The following is a 153-amino-acid chain: uncharacterized protein (153 aa).

A signal peptide spans 1–22; it reads MKLLKKGTTVLFVMIMAVMLVA. Residue C23 is the site of N-palmitoyl cysteine attachment. A lipid anchor (S-diacylglycerol cysteine) is attached at C23. The disordered stretch occupies residues 121–153; it reads LPGMASTGDVSKGISMKESEKMLKSQGFKEVEK. Positions 135–153 are enriched in basic and acidic residues; the sequence is SMKESEKMLKSQGFKEVEK.

To E.coli YehR.

The protein resides in the cell membrane. This is an uncharacterized protein from Listeria innocua serovar 6a (strain ATCC BAA-680 / CLIP 11262).